A 432-amino-acid polypeptide reads, in one-letter code: Adenylosuccinate synthetase (432 aa).

GTP-binding positions include 13–19 (GDEGKGK) and 41–43 (GHT). The Proton acceptor role is filled by D14. Residues D14 and G41 each contribute to the Mg(2+) site. IMP-binding positions include 14-17 (DEGK), 39-42 (NAGH), T130, R144, Q225, T240, and R304. H42 functions as the Proton donor in the catalytic mechanism. Position 300–306 (300–306 (AVTGRPR)) interacts with substrate. Residues R306, 332–334 (KLD), and 415–417 (STG) contribute to the GTP site.

The protein belongs to the adenylosuccinate synthetase family. As to quaternary structure, homodimer. Mg(2+) serves as cofactor.

Its subcellular location is the cytoplasm. The enzyme catalyses IMP + L-aspartate + GTP = N(6)-(1,2-dicarboxyethyl)-AMP + GDP + phosphate + 2 H(+). It participates in purine metabolism; AMP biosynthesis via de novo pathway; AMP from IMP: step 1/2. Plays an important role in the de novo pathway of purine nucleotide biosynthesis. Catalyzes the first committed step in the biosynthesis of AMP from IMP. The polypeptide is Adenylosuccinate synthetase (Mannheimia succiniciproducens (strain KCTC 0769BP / MBEL55E)).